The primary structure comprises 74 residues: NAD(P)H-quinone oxidoreductase subunit L (74 aa).

A run of 2 helical transmembrane segments spans residues 5–25 and 43–63; these read LIIA…VPAA and AFMY…APLL.

This sequence belongs to the complex I NdhL subunit family. NDH-1 can be composed of about 15 different subunits; different subcomplexes with different compositions have been identified which probably have different functions.

Its subcellular location is the cellular thylakoid membrane. It carries out the reaction a plastoquinone + NADH + (n+1) H(+)(in) = a plastoquinol + NAD(+) + n H(+)(out). It catalyses the reaction a plastoquinone + NADPH + (n+1) H(+)(in) = a plastoquinol + NADP(+) + n H(+)(out). In terms of biological role, NDH-1 shuttles electrons from an unknown electron donor, via FMN and iron-sulfur (Fe-S) centers, to quinones in the respiratory and/or the photosynthetic chain. The immediate electron acceptor for the enzyme in this species is believed to be plastoquinone. Couples the redox reaction to proton translocation, and thus conserves the redox energy in a proton gradient. Cyanobacterial NDH-1 also plays a role in inorganic carbon-concentration. The sequence is that of NAD(P)H-quinone oxidoreductase subunit L from Synechococcus elongatus (strain ATCC 33912 / PCC 7942 / FACHB-805) (Anacystis nidulans R2).